The following is a 364-amino-acid chain: Selection and upkeep of intraepithelial T-cells protein 11 (364 aa).

The N-terminal stretch at methionine 1–serine 28 is a signal peptide. Residues leucine 29 to isoleucine 118 enclose the Ig-like V-type domain. The Extracellular segment spans residues leucine 29–tyrosine 138. Cysteine 48 and cysteine 102 are joined by a disulfide. Residues leucine 139–leucine 159 traverse the membrane as a helical segment. Topologically, residues threonine 160 to proline 186 are cytoplasmic. Residues leucine 187–phenylalanine 207 traverse the membrane as a helical segment. Topologically, residues arginine 208 to lysine 230 are extracellular. A helical membrane pass occupies residues threonine 231 to asparagine 251. Topologically, residues arginine 252–histidine 364 are cytoplasmic.

It belongs to the SKINT family. In terms of tissue distribution, expressed in skin and thymus.

Its subcellular location is the membrane. Its function is as follows. May act by engaging a cell surface molecule on immature T-cells in the embryonic thymus. This is Selection and upkeep of intraepithelial T-cells protein 11 (Skint11) from Mus musculus (Mouse).